A 1494-amino-acid chain; its full sequence is DNA-directed RNA polymerase subunit beta' (1494 aa).

Residues cysteine 67, cysteine 69, cysteine 82, and cysteine 85 each contribute to the Zn(2+) site. 3 residues coordinate Mg(2+): aspartate 499, aspartate 501, and aspartate 503. Cysteine 868, cysteine 944, cysteine 951, and cysteine 954 together coordinate Zn(2+).

This sequence belongs to the RNA polymerase beta' chain family. In terms of assembly, the RNAP catalytic core consists of 2 alpha, 1 beta, 1 beta' and 1 omega subunit. When a sigma factor is associated with the core the holoenzyme is formed, which can initiate transcription. Mg(2+) serves as cofactor. Zn(2+) is required as a cofactor.

It catalyses the reaction RNA(n) + a ribonucleoside 5'-triphosphate = RNA(n+1) + diphosphate. DNA-dependent RNA polymerase catalyzes the transcription of DNA into RNA using the four ribonucleoside triphosphates as substrates. This is DNA-directed RNA polymerase subunit beta' from Chlorobaculum parvum (strain DSM 263 / NCIMB 8327) (Chlorobium vibrioforme subsp. thiosulfatophilum).